Reading from the N-terminus, the 183-residue chain is Oleosin Bn-V (183 aa).

The interval 1 to 47 is polar; sequence PARTHHDITTRDQYPLISRDRDQYGMIGRDQYNMSGQNYSKSRQIAK. Repeats lie at residues 11–20 and 21–30; these read RDQYPLISRD and RDQYGMIGRD. The interval 48-119 is hydrophobic; that stretch reads ATTAVTAGDS…AAITVFSWIY (72 aa). 2 helical membrane passes run 57 to 77 and 99 to 119; these read SLLVLSSLTLVGTVIALIVAT and TGFLSSGAFGIAAITVFSWIY. The interval 154-183 is disordered; that stretch reads YGQQHTGEEHDRDRDHRTDRDRTRGTQHTT. Over residues 159–177 the composition is skewed to basic and acidic residues; sequence TGEEHDRDRDHRTDRDRTR.

Belongs to the oleosin family.

The protein resides in the lipid droplet. It localises to the membrane. In terms of biological role, may have a structural role to stabilize the lipid body during desiccation of the seed by preventing coalescence of the oil. Probably interacts with both lipid and phospholipid moieties of lipid bodies. May also provide recognition signals for specific lipase anchorage in lipolysis during seedling growth. This chain is Oleosin Bn-V, found in Brassica napus (Rape).